The chain runs to 89 residues: Small ribosomal subunit protein uS15 (89 aa).

The protein belongs to the universal ribosomal protein uS15 family. Part of the 30S ribosomal subunit. Forms a bridge to the 50S subunit in the 70S ribosome, contacting the 23S rRNA.

Functionally, one of the primary rRNA binding proteins, it binds directly to 16S rRNA where it helps nucleate assembly of the platform of the 30S subunit by binding and bridging several RNA helices of the 16S rRNA. Its function is as follows. Forms an intersubunit bridge (bridge B4) with the 23S rRNA of the 50S subunit in the ribosome. This chain is Small ribosomal subunit protein uS15, found in Streptococcus thermophilus (strain CNRZ 1066).